Consider the following 256-residue polypeptide: MRIDLNADLGEGFGAWTMGEDEALMQLISSANVACGFHAGDPLIMDSTVRRAKALGIDLGAHVGFPDLQGFGRRRMNIELKELCAIVVYQLGALAGIATAAGYRVTHMSFHGALGNMAAADAELAGPLVKAVARFDPQMIISSSSSEAIEQAAQACNLRVATTFLADRAYDENCLLVPRGIAGAVVKDPEQVRARVAQLLQDGTVTTLSGKRVAVNAQSILLHGDTPGAVELARSIRHSIEEQGGVITPVSQLLGS.

This sequence belongs to the LamB/PxpA family. As to quaternary structure, forms a complex composed of PxpA, PxpB and PxpC.

The enzyme catalyses 5-oxo-L-proline + ATP + 2 H2O = L-glutamate + ADP + phosphate + H(+). Its function is as follows. Catalyzes the cleavage of 5-oxoproline to form L-glutamate coupled to the hydrolysis of ATP to ADP and inorganic phosphate. The chain is 5-oxoprolinase subunit A 1 from Pseudomonas syringae pv. tomato (strain ATCC BAA-871 / DC3000).